A 432-amino-acid polypeptide reads, in one-letter code: Succinate--CoA ligase [GDP-forming] subunit beta, mitochondrial (432 aa).

The N-terminal 37 residues, 1–37 (MAAPVGAQARKLLRDLVLRPPLLAARSQVVQLTSRRW), are a transit peptide targeting the mitochondrion. The 229-residue stretch at 46–274 (KKLMSDNGVK…NAEFRQKDIF (229 aa)) folds into the ATP-grasp domain. Gln57 contacts GTP. N6-acetyllysine is present on Lys73. Lys78 carries the N6-succinyllysine modification. 90–92 (GRG) is a GTP binding site. Residues Lys111, Lys132, and Lys139 each carry the N6-acetyllysine modification. Leu146 lines the GTP pocket. Position 161 is a phosphoserine (Ser161). An N6-acetyllysine mark is found at Lys200, Lys218, and Lys227. The Mg(2+) site is built by Asn243 and Asp257. Lys271 carries the post-translational modification N6-acetyllysine. Substrate is bound at residue Asn308. Lys338 carries the N6-succinyllysine modification. The residue at position 347 (Lys347) is an N6-acetyllysine. 365–367 (GIV) provides a ligand contact to substrate. Residues Lys386 and Lys423 each carry the N6-acetyllysine modification.

It belongs to the succinate/malate CoA ligase beta subunit family. GTP-specific subunit beta subfamily. In terms of assembly, heterodimer of an alpha and a beta subunit. The beta subunit determines specificity for GTP. Mg(2+) is required as a cofactor.

It is found in the mitochondrion. The catalysed reaction is GTP + succinate + CoA = succinyl-CoA + GDP + phosphate. It functions in the pathway carbohydrate metabolism; tricarboxylic acid cycle; succinate from succinyl-CoA (ligase route): step 1/1. Functionally, GTP-specific succinyl-CoA synthetase functions in the citric acid cycle (TCA), coupling the hydrolysis of succinyl-CoA to the synthesis of GTP and thus represents the only step of substrate-level phosphorylation in the TCA. The beta subunit provides nucleotide specificity of the enzyme and binds the substrate succinate, while the binding sites for coenzyme A and phosphate are found in the alpha subunit. This is Succinate--CoA ligase [GDP-forming] subunit beta, mitochondrial from Bos taurus (Bovine).